We begin with the raw amino-acid sequence, 443 residues long: Ribulose bisphosphate carboxylase large chain (443 aa).

Position 7 is an N6,N6,N6-trimethyllysine (Lys7). Substrate-binding residues include Asn116 and Thr166. Catalysis depends on Lys168, which acts as the Proton acceptor. Substrate is bound at residue Lys170. Residues Lys194, Asp196, and Glu197 each coordinate Mg(2+). Residue Lys194 is modified to N6-carboxylysine. The active-site Proton acceptor is the His287. Positions 288, 320, and 372 each coordinate substrate.

This sequence belongs to the RuBisCO large chain family. Type I subfamily. Heterohexadecamer of 8 large chains and 8 small chains; disulfide-linked. The disulfide link is formed within the large subunit homodimers. Mg(2+) is required as a cofactor. The disulfide bond which can form in the large chain dimeric partners within the hexadecamer appears to be associated with oxidative stress and protein turnover.

It is found in the plastid. It localises to the chloroplast. It catalyses the reaction 2 (2R)-3-phosphoglycerate + 2 H(+) = D-ribulose 1,5-bisphosphate + CO2 + H2O. The enzyme catalyses D-ribulose 1,5-bisphosphate + O2 = 2-phosphoglycolate + (2R)-3-phosphoglycerate + 2 H(+). Its function is as follows. RuBisCO catalyzes two reactions: the carboxylation of D-ribulose 1,5-bisphosphate, the primary event in carbon dioxide fixation, as well as the oxidative fragmentation of the pentose substrate in the photorespiration process. Both reactions occur simultaneously and in competition at the same active site. This chain is Ribulose bisphosphate carboxylase large chain, found in Abies homolepis (Nikko fir).